Reading from the N-terminus, the 188-residue chain is Threonylcarbamoyl-AMP synthase (188 aa).

Residues 3–188 (QLHPSDIKDI…RSGKILRNGQ (186 aa)) form the YrdC-like domain.

It belongs to the SUA5 family. TsaC subfamily.

The protein resides in the cytoplasm. The enzyme catalyses L-threonine + hydrogencarbonate + ATP = L-threonylcarbamoyladenylate + diphosphate + H2O. Required for the formation of a threonylcarbamoyl group on adenosine at position 37 (t(6)A37) in tRNAs that read codons beginning with adenine. Catalyzes the conversion of L-threonine, HCO(3)(-)/CO(2) and ATP to give threonylcarbamoyl-AMP (TC-AMP) as the acyladenylate intermediate, with the release of diphosphate. This Shewanella putrefaciens (strain CN-32 / ATCC BAA-453) protein is Threonylcarbamoyl-AMP synthase.